The following is a 343-amino-acid chain: Protein RecA (343 aa).

64 to 71 is a binding site for ATP; that stretch reads GPESSGKT.

It belongs to the RecA family.

Its subcellular location is the cytoplasm. Functionally, can catalyze the hydrolysis of ATP in the presence of single-stranded DNA, the ATP-dependent uptake of single-stranded DNA by duplex DNA, and the ATP-dependent hybridization of homologous single-stranded DNAs. It interacts with LexA causing its activation and leading to its autocatalytic cleavage. The polypeptide is Protein RecA (Bacillus thuringiensis (strain Al Hakam)).